Consider the following 149-residue polypeptide: MKIIFTEDVRGKGRRGEIKELPDGYANFLIKQNKAKQANAQAMSQLKGQKRAEARKEAEELEEAKKFKELLESGERVVEMKAKAGTDGRLFGSITSKQISQELEKQYGMKIDKRKMELREPIRTMGYVNVPVKLHNEVTAKIRVHISEK.

Belongs to the bacterial ribosomal protein bL9 family.

Functionally, binds to the 23S rRNA. This is Large ribosomal subunit protein bL9 from Ligilactobacillus salivarius (strain UCC118) (Lactobacillus salivarius).